The chain runs to 278 residues: Sulfur carrier protein FdhD (278 aa).

The active-site Cysteine persulfide intermediate is C113. Position 251–256 (251–256 (FCRNGR)) interacts with Mo-bis(molybdopterin guanine dinucleotide).

The protein belongs to the FdhD family.

Its subcellular location is the cytoplasm. Its function is as follows. Required for formate dehydrogenase (FDH) activity. Acts as a sulfur carrier protein that transfers sulfur from IscS to the molybdenum cofactor prior to its insertion into FDH. The protein is Sulfur carrier protein FdhD of Shewanella oneidensis (strain ATCC 700550 / JCM 31522 / CIP 106686 / LMG 19005 / NCIMB 14063 / MR-1).